The sequence spans 345 residues: Biotin synthase (345 aa).

Positions 39-266 (NEVQVSTLLS…ASHVRLSAGR (228 aa)) constitute a Radical SAM core domain. [4Fe-4S] cluster-binding residues include Cys-54, Cys-58, and Cys-61. Residues Cys-98, Cys-129, Cys-189, and Arg-261 each contribute to the [2Fe-2S] cluster site.

Belongs to the radical SAM superfamily. Biotin synthase family. As to quaternary structure, homodimer. The cofactor is [4Fe-4S] cluster. [2Fe-2S] cluster serves as cofactor.

It carries out the reaction (4R,5S)-dethiobiotin + (sulfur carrier)-SH + 2 reduced [2Fe-2S]-[ferredoxin] + 2 S-adenosyl-L-methionine = (sulfur carrier)-H + biotin + 2 5'-deoxyadenosine + 2 L-methionine + 2 oxidized [2Fe-2S]-[ferredoxin]. It functions in the pathway cofactor biosynthesis; biotin biosynthesis; biotin from 7,8-diaminononanoate: step 2/2. Its function is as follows. Catalyzes the conversion of dethiobiotin (DTB) to biotin by the insertion of a sulfur atom into dethiobiotin via a radical-based mechanism. This is Biotin synthase from Idiomarina loihiensis (strain ATCC BAA-735 / DSM 15497 / L2-TR).